Here is a 351-residue protein sequence, read N- to C-terminus: UDP-N-acetylglucosamine--N-acetylmuramyl-(pentapeptide) pyrophosphoryl-undecaprenol N-acetylglucosamine transferase (351 aa).

UDP-N-acetyl-alpha-D-glucosamine-binding positions include 11-13, Asn-120, Arg-161, Ser-187, and Gln-281; that span reads TGG.

The protein belongs to the glycosyltransferase 28 family. MurG subfamily.

Its subcellular location is the cell inner membrane. It carries out the reaction di-trans,octa-cis-undecaprenyl diphospho-N-acetyl-alpha-D-muramoyl-L-alanyl-D-glutamyl-meso-2,6-diaminopimeloyl-D-alanyl-D-alanine + UDP-N-acetyl-alpha-D-glucosamine = di-trans,octa-cis-undecaprenyl diphospho-[N-acetyl-alpha-D-glucosaminyl-(1-&gt;4)]-N-acetyl-alpha-D-muramoyl-L-alanyl-D-glutamyl-meso-2,6-diaminopimeloyl-D-alanyl-D-alanine + UDP + H(+). It participates in cell wall biogenesis; peptidoglycan biosynthesis. Its function is as follows. Cell wall formation. Catalyzes the transfer of a GlcNAc subunit on undecaprenyl-pyrophosphoryl-MurNAc-pentapeptide (lipid intermediate I) to form undecaprenyl-pyrophosphoryl-MurNAc-(pentapeptide)GlcNAc (lipid intermediate II). The protein is UDP-N-acetylglucosamine--N-acetylmuramyl-(pentapeptide) pyrophosphoryl-undecaprenol N-acetylglucosamine transferase of Rippkaea orientalis (strain PCC 8801 / RF-1) (Cyanothece sp. (strain PCC 8801)).